A 468-amino-acid chain; its full sequence is MKKFLDKDFLLSTEAAKELFHKYAEKKPILDYHCHINPEEIAKDRQFENISQLWLGSDHYKWRQMRSCGVEEKYITGNASDSEKFQKWAETLEKAIGNPLYHWSHLELRRYFGYEGVLNGETAKEVWTICNEKLREKSMSARSMIKQSSVTLICTTDDPVDNLEWHKKIKEEESFDVQVLPTWRPDRALNIEKPGFKDYIARFSEVSGVNITSFKTMKEAFRKRLGFFISSGCRTTDHAPEYIMYVPSSDKEVETIFDKRLSGVALSKEEELKYKTAFMLFAGGEYSKNDLVMELHYGCKRNNNTLVFDKLGPDTGHDCIDNFAPGAQLSNFLDALDSAGQLPRTIIYSLNPNDNAVIGTILGCFQDSSALSKIQQGAAWWFNDHKPGITEQLTSLANLGILSNFVGMLTDSRSFLSYTRHEYFRRILCDLIGSWVENGEYPYDVKILSKIVSDISYDNAVRYFKFKL.

It belongs to the metallo-dependent hydrolases superfamily. Uronate isomerase family.

It carries out the reaction D-glucuronate = D-fructuronate. It catalyses the reaction aldehydo-D-galacturonate = keto-D-tagaturonate. It participates in carbohydrate metabolism; pentose and glucuronate interconversion. This Endomicrobium trichonymphae protein is Uronate isomerase.